Here is a 142-residue protein sequence, read N- to C-terminus: Succinate dehydrogenase assembly factor 2, mitochondrial (142 aa).

It belongs to the SDHAF2 family. Interacts with the flavoprotein subunit within the SDH catalytic dimer.

The protein resides in the mitochondrion matrix. Functionally, plays an essential role in the assembly of succinate dehydrogenase (SDH), an enzyme complex (also referred to as respiratory complex II) that is a component of both the tricarboxylic acid (TCA) cycle and the mitochondrial electron transport chain, and which couples the oxidation of succinate to fumarate with the reduction of ubiquinone (coenzyme Q) to ubiquinol. Required for flavinylation (covalent attachment of FAD) of the flavoprotein subunit of the SDH catalytic dimer. The polypeptide is Succinate dehydrogenase assembly factor 2, mitochondrial (Debaryomyces hansenii (strain ATCC 36239 / CBS 767 / BCRC 21394 / JCM 1990 / NBRC 0083 / IGC 2968) (Yeast)).